We begin with the raw amino-acid sequence, 282 residues long: Cholesterol 25-hydroxylase-like protein 1, member 1 (282 aa).

N-linked (GlcNAc...) asparagine glycosylation occurs at N3. The next 3 helical transmembrane spans lie at 40 to 60 (FFPVLLAFSSYIIFSVPFAVL), 85 to 107 (MLRTLWTAVYNHLVFVLPAVLIT), and 127 to 147 (FSGGLGALLVFDTQYFLWHMV). The Fatty acid hydroxylase domain occupies 133–265 (ALLVFDTQYF…FSHWDKIFGT (133 aa)). Positions 144–148 (WHMVH) match the Histidine box-1 motif. A Histidine box-2 motif is present at residues 159–163 (HAIHH). A Histidine box-3 motif is present at residues 240-246 (AHDMHHQ).

This sequence belongs to the sterol desaturase family. Fe cation serves as cofactor.

It localises to the endoplasmic reticulum membrane. May catalyze the formation of 25-hydroxycholesterol from cholesterol. The chain is Cholesterol 25-hydroxylase-like protein 1, member 1 (ch25hl1.1) from Danio rerio (Zebrafish).